The chain runs to 525 residues: Arabinose import ATP-binding protein AraG 2 (525 aa).

The tract at residues 1–25 (MTDTTIRARGAQAAGSPAGAGPLDA) is disordered. Low complexity predominate over residues 7-25 (RARGAQAAGSPAGAGPLDA). ABC transporter domains are found at residues 35-270 (LELD…MVGR) and 281-524 (REPG…LALP). Residue 67-74 (GENGAGKS) participates in ATP binding.

It belongs to the ABC transporter superfamily. Arabinose importer (TC 3.A.1.2.2) family. In terms of assembly, the complex is composed of two ATP-binding proteins (AraG), two transmembrane proteins (AraH) and a solute-binding protein (AraF).

The protein localises to the cell inner membrane. The catalysed reaction is L-arabinose(out) + ATP + H2O = L-arabinose(in) + ADP + phosphate + H(+). In terms of biological role, part of the ABC transporter complex AraFGH involved in arabinose import. Responsible for energy coupling to the transport system. This is Arabinose import ATP-binding protein AraG 2 from Burkholderia thailandensis (strain ATCC 700388 / DSM 13276 / CCUG 48851 / CIP 106301 / E264).